The primary structure comprises 464 residues: Protein FAM90A14 (464 aa).

Disordered regions lie at residues 1–42, 70–389, and 411–437; these read MMAR…DPRL, PATL…HDGA, and APSF…SEAP. Basic and acidic residues-rich tracts occupy residues 74-89 and 97-114; these read GKKE…KPRV and NKDK…DPQR. The segment covering 180–197 has biased composition (low complexity); it reads LASLSPLRKASLSSSSSL.

This sequence belongs to the FAM90 family.

This Homo sapiens (Human) protein is Protein FAM90A14.